The following is a 573-amino-acid chain: Ascochitine biosynthesis cluster transcriptional regulator (573 aa).

It is found in the nucleus. In terms of biological role, transcription factor that regulates the expression of the gene cluster that mediates the biosynthesis of the mycotoxin ascochitine, an o-quinone methide that plays a possible protective role against other microbial competitors in nature and is considered to be important for pathogenicity of legume-associated Didymella species. The polypeptide is Ascochitine biosynthesis cluster transcriptional regulator (Didymella fabae (Leaf and pod spot disease fungus)).